The chain runs to 194 residues: GTP cyclohydrolase 1 (194 aa).

3 residues coordinate Zn(2+): C85, H88, and C156.

The protein belongs to the GTP cyclohydrolase I family. Toroid-shaped homodecamer, composed of two pentamers of five dimers.

It catalyses the reaction GTP + H2O = 7,8-dihydroneopterin 3'-triphosphate + formate + H(+). It functions in the pathway cofactor biosynthesis; 7,8-dihydroneopterin triphosphate biosynthesis; 7,8-dihydroneopterin triphosphate from GTP: step 1/1. This chain is GTP cyclohydrolase 1, found in Bacteroides fragilis (strain YCH46).